The chain runs to 258 residues: Translocon-associated protein subunit alpha (258 aa).

The signal sequence occupies residues 1–24; it reads MMNLRVLFLALLLLASPLLQVARC. Over 25–190 the chain is Lumenal; that stretch reads QSDAEDHSSL…ESGGLLSGES (166 aa). N-linked (GlcNAc...) asparagine glycans are attached at residues Asn57, Asn119, and Asn127. A helical transmembrane segment spans residues 191–209; the sequence is VFLLTLGIGLLLLLGLWAY. Residues 210-258 are Cytoplasmic-facing; sequence SQVQRLTKKTKKVSKVEVGTRSTEASLDEWLEGTTLAKTSSGKTKNKKN.

This sequence belongs to the TRAP-alpha family. In terms of assembly, heterotetramer of TRAP-alpha, TRAP-beta, TRAP-delta and TRAP-gamma. Post-translationally, phosphorylated in its cytoplasmic tail.

The protein localises to the endoplasmic reticulum membrane. In terms of biological role, TRAP proteins are part of a complex whose function is to bind calcium to the ER membrane and thereby regulate the retention of ER resident proteins. May be involved in the recycling of the translocation apparatus after completion of the translocation process or may function as a membrane-bound chaperone facilitating folding of translocated proteins. This chain is Translocon-associated protein subunit alpha, found in Arabidopsis thaliana (Mouse-ear cress).